A 98-amino-acid polypeptide reads, in one-letter code: N(2)-fixation sustaining protein CowN (98 aa).

The protein belongs to the CowN family.

Functionally, is required to sustain N(2)-dependent growth in the presence of low levels of carbon monoxide (CO). Probably acts by protecting the N(2) fixation ability of the nitrogenase complex, which is inactivated in the presence of CO. The sequence is that of N(2)-fixation sustaining protein CowN from Azospirillum sp. (strain B510).